Reading from the N-terminus, the 228-residue chain is Phosphoglycolate phosphatase (228 aa).

Catalysis depends on aspartate 12, which acts as the Nucleophile. Mg(2+) contacts are provided by aspartate 12, aspartate 14, and aspartate 177.

This sequence belongs to the HAD-like hydrolase superfamily. CbbY/CbbZ/Gph/YieH family. It depends on Mg(2+) as a cofactor.

It catalyses the reaction 2-phosphoglycolate + H2O = glycolate + phosphate. It functions in the pathway organic acid metabolism; glycolate biosynthesis; glycolate from 2-phosphoglycolate: step 1/1. Its function is as follows. Specifically catalyzes the dephosphorylation of 2-phosphoglycolate. Is involved in the dissimilation of the intracellular 2-phosphoglycolate formed during the DNA repair of 3'-phosphoglycolate ends, a major class of DNA lesions induced by oxidative stress. This chain is Phosphoglycolate phosphatase, found in Vibrio parahaemolyticus serotype O3:K6 (strain RIMD 2210633).